A 70-amino-acid polypeptide reads, in one-letter code: Protein SlyX homolog (70 aa).

It belongs to the SlyX family.

The polypeptide is Protein SlyX homolog (Pseudoalteromonas atlantica (strain T6c / ATCC BAA-1087)).